Reading from the N-terminus, the 500-residue chain is Cysteine-rich secretory protein LCCL domain-containing 1 (500 aa).

The N-terminal stretch at 1–23 is a signal peptide; it reads MMCKAQEWLRVTALLFVARAVPA. The SCP domain maps to 66-206; the sequence is LDLHNKLRSQ…PKAVYLVCNY (141 aa). The segment at 258 to 281 is disordered; the sequence is EIERQQSQVHDTHVRTRSDDSDRN. 2 consecutive LCCL domains span residues 289-384 and 390-492; these read MSQI…ANSF and TVQA…TGGK. Intrachain disulfides connect cysteine 295–cysteine 313, cysteine 317–cysteine 337, cysteine 396–cysteine 418, and cysteine 422–cysteine 445.

This sequence belongs to the CRISP family.

It localises to the secreted. In Mus musculus (Mouse), this protein is Cysteine-rich secretory protein LCCL domain-containing 1 (Crispld1).